Here is a 366-residue protein sequence, read N- to C-terminus: tRNA/tmRNA (uracil-C(5))-methyltransferase (366 aa).

S-adenosyl-L-methionine is bound by residues Gln-190, Tyr-218, Asn-223, Glu-239, and Asp-299. Cys-324 functions as the Nucleophile in the catalytic mechanism. Catalysis depends on Glu-358, which acts as the Proton acceptor.

It belongs to the class I-like SAM-binding methyltransferase superfamily. RNA M5U methyltransferase family. TrmA subfamily.

The catalysed reaction is uridine(54) in tRNA + S-adenosyl-L-methionine = 5-methyluridine(54) in tRNA + S-adenosyl-L-homocysteine + H(+). It carries out the reaction uridine(341) in tmRNA + S-adenosyl-L-methionine = 5-methyluridine(341) in tmRNA + S-adenosyl-L-homocysteine + H(+). Dual-specificity methyltransferase that catalyzes the formation of 5-methyluridine at position 54 (m5U54) in all tRNAs, and that of position 341 (m5U341) in tmRNA (transfer-mRNA). The protein is tRNA/tmRNA (uracil-C(5))-methyltransferase of Shigella flexneri serotype 5b (strain 8401).